We begin with the raw amino-acid sequence, 115 residues long: Large ribosomal subunit protein P2 (115 aa).

The residue at position 1 (Met1) is an N-acetylmethionine. Phosphoserine occurs at positions 17 and 19. The residue at position 21 (Lys21) is an N6-acetyllysine; alternate. Residue Lys21 is modified to N6-succinyllysine; alternate. A compositionally biased stretch (low complexity) spans 76–90 (APGSAAPAAGSAPAA). Residues 76–115 (APGSAAPAAGSAPAAAEERKEEKKEESEESDDDMGFGLFD) form a disordered region. Ser79 and Ser86 each carry phosphoserine. A compositionally biased stretch (basic and acidic residues) spans 91-101 (AEERKEEKKEE). A phosphoserine mark is found at Ser102 and Ser105.

It belongs to the eukaryotic ribosomal protein P1/P2 family. In terms of assembly, heterodimer with RPLP1 at the lateral ribosomal stalk of the large ribosomal subunit.

Functionally, plays an important role in the elongation step of protein synthesis. The protein is Large ribosomal subunit protein P2 (RPLP2) of Equus caballus (Horse).